Consider the following 442-residue polypeptide: Cell adhesion molecule 1 (442 aa).

Residues 1–44 (MASVVLPSGSQCAAAAAAAAPPGLRLRLLLLLFSAAALIPTGDG) form the signal peptide. One can recognise an Ig-like V-type domain in the interval 45-139 (QNLFTKDVTV…PPQESYTTIT (95 aa)). Topologically, residues 45 to 374 (QNLFTKDVTV…EEGSIRAVDH (330 aa)) are extracellular. A disulfide bond links Cys-64 and Cys-124. Asn-67, Asn-101, Asn-113, and Asn-165 each carry an N-linked (GlcNAc...) asparagine glycan. Ig-like C2-type domains are found at residues 144 to 238 (PRNL…RYLE) and 243 to 329 (PQVH…YMLY). 2 cysteine pairs are disulfide-bonded: Cys-166/Cys-220 and Cys-267/Cys-313. 2 N-linked (GlcNAc...) asparagine glycosylation sites follow: Asn-304 and Asn-308. A helical membrane pass occupies residues 375-395 (AVIGGVVAVVVFAMLCLLIIL). The Cytoplasmic segment spans residues 396-442 (GRYFARHKGTYFTHEAKGADDAADADTAIINAEGGQNNSEEKKEYFI). Thr-422 is subject to Phosphothreonine. Position 434 is a phosphoserine (Ser-434).

It belongs to the nectin family. Homodimer (via Ig-like V-type domain). Interacts with FARP1. Interacts (via Ig-like V-type domain) with CRTAM (via Ig-like V-type domain); the interaction competes with CRTAM homodimerization and CADM1 homodimerization. Interacts (via C-terminus) with EPB41L3/DAL1. The interaction with EPB41L3/DAL1 may act to anchor CADM1 to the actin cytoskeleton. Interacts (via C-terminus) with MPP2 (via PDZ domain). Interacts (via C-terminus) with MPP3 (via PDZ domain); this interaction connects CADM1 with DLG1. Interacts (via C-terminus) with PALS2 (via PDZ domain). In terms of assembly, (Microbial infection) Interacts with herpes virus 8 proteins vFLIP and vGPCR; these interactions are essential for NF-kappa-B activation. Post-translationally, glycosylation at Asn-67 and Asn-101 promotes adhesive binding and synapse induction.

Its subcellular location is the cell membrane. It is found in the synapse. Its function is as follows. Mediates homophilic cell-cell adhesion in a Ca(2+)-independent manner. Also mediates heterophilic cell-cell adhesion with CADM3 and NECTIN3 in a Ca(2+)-independent manner. Interaction with CRTAM promotes natural killer (NK) cell cytotoxicity and interferon-gamma (IFN-gamma) secretion by CD8+ cells in vitro as well as NK cell-mediated rejection of tumors expressing CADM1 in vivo. In mast cells, may mediate attachment to and promote communication with nerves. CADM1, together with MITF, is essential for development and survival of mast cells in vivo. By interacting with CRTAM and thus promoting the adhesion between CD8+ T-cells and CD8+ dendritic cells, regulates the retention of activated CD8+ T-cell within the draining lymph node. Required for the intestinal retention of intraepithelial CD4+ CD8+ T-cells and, to a lesser extent, intraepithelial and lamina propria CD8+ T-cells and CD4+ T-cells. Interaction with CRTAM promotes the adhesion to gut-associated CD103+ dendritic cells, which may facilitate the expression of gut-homing and adhesion molecules on T-cells and the conversion of CD4+ T-cells into CD4+ CD8+ T-cells. Acts as a synaptic cell adhesion molecule and plays a role in the formation of dendritic spines and in synapse assembly. May be involved in neuronal migration, axon growth, pathfinding, and fasciculation on the axons of differentiating neurons. May play diverse roles in the spermatogenesis including in the adhesion of spermatocytes and spermatids to Sertoli cells and for their normal differentiation into mature spermatozoa. Acts as a tumor suppressor in non-small-cell lung cancer (NSCLC) cells. May contribute to the less invasive phenotypes of lepidic growth tumor cells. In terms of biological role, (Microbial infection) Induces cell fusion in neuron infected by a neuropathogenic strain of measles. Interacts with measles hemagglutinin to trigger hyperfusogenic F-mediated membrane fusion and presumably transsynaptic cell-to-cell transmission of the virus. The polypeptide is Cell adhesion molecule 1 (Homo sapiens (Human)).